An 87-amino-acid chain; its full sequence is Conotoxin Cl12.3 (87 aa).

The signal sequence occupies residues 1-19 (MKLTCVLVVLLLFLPYGDL). The propeptide occupies 20–42 (ITNNYIGGAARKVTPWRRNLKTR).

Belongs to the conotoxin O1 superfamily. Post-translationally, contains 4 disulfide bonds. In terms of tissue distribution, expressed by the venom duct.

The protein resides in the secreted. This chain is Conotoxin Cl12.3, found in Californiconus californicus (California cone).